The chain runs to 283 residues: MSSDDTTDPTADDESFTDSPVAGLEQSTTTRGSGRTVISARNINVWYNETQALSDITMDIPEQEVTALIGPSGCGKSTFLRCINRMNDRIDACRIEGELELHGKNVYDEDVDPVALRRKVGMVFQKPNPFPKSIYDNVAYGLKIQGYDGDIDARVEEALRGAALWDEVNDQLDESGLELSGGQQQRLCIARAIAPDPEVVLMDEPTSALDPVAASKVEDLIDELVEDYTVVIVTHNMQQAARISDKTAVFLTGGELVEFDDTASVFENPSSERVENYITGKFG.

A compositionally biased stretch (acidic residues) spans 1–16 (MSSDDTTDPTADDESF). A disordered region spans residues 1-35 (MSSDDTTDPTADDESFTDSPVAGLEQSTTTRGSGR). An ABC transporter domain is found at 38-278 (ISARNINVWY…PSSERVENYI (241 aa)). 70–77 (GPSGCGKS) is a binding site for ATP.

This sequence belongs to the ABC transporter superfamily. Phosphate importer (TC 3.A.1.7) family. As to quaternary structure, the complex is composed of two ATP-binding proteins (PstB), two transmembrane proteins (PstC and PstA) and a solute-binding protein (PstS).

Its subcellular location is the cell membrane. It carries out the reaction phosphate(out) + ATP + H2O = ADP + 2 phosphate(in) + H(+). In terms of biological role, part of the ABC transporter complex PstSACB involved in phosphate import. Responsible for energy coupling to the transport system. In Natronomonas pharaonis (strain ATCC 35678 / DSM 2160 / CIP 103997 / JCM 8858 / NBRC 14720 / NCIMB 2260 / Gabara) (Halobacterium pharaonis), this protein is Phosphate import ATP-binding protein PstB 1.